The sequence spans 241 residues: DnaA regulatory inactivator Hda (241 aa).

The protein belongs to the DnaA family. HdA subfamily. The active form seems to be an ADP-bound monomer. Forms the RIDA complex (regulatory inactivation of DnaA) of ATP-DnaA, ADP-Hda and the DNA-loaded beta sliding clamp (dnaN).

Functionally, mediates the interaction of DNA replication initiator protein DnaA with DNA polymerase subunit beta sliding clamp (dnaN). Stimulates hydrolysis of ATP-DnaA to ADP-DnaA, rendering DnaA inactive for reinitiation, a process called regulatory inhibition of DnaA or RIDA. The sequence is that of DnaA regulatory inactivator Hda from Citrobacter koseri (strain ATCC BAA-895 / CDC 4225-83 / SGSC4696).